We begin with the raw amino-acid sequence, 138 residues long: Class I hydrophobin 1 (138 aa).

The first 19 residues, 1–19 (MRFSAATVSALAMALTVAA), serve as a signal peptide directing secretion. 4 disulfides stabilise this stretch: Cys45–Cys113, Cys53–Cys107, Cys54–Cys91, and Cys114–Cys131.

This sequence belongs to the fungal hydrophobin family. In terms of assembly, interacts with the lipid droplet coating protein Cap20.

Its subcellular location is the secreted. It localises to the lipid droplet. Functionally, aerial growth, conidiation, and dispersal of filamentous fungi in the environment rely upon a capability of their secreting small amphipathic proteins called hydrophobins (HPBs) with low sequence identity. Class I can self-assemble into an outermost layer of rodlet bundles on aerial cell surfaces, conferring cellular hydrophobicity that supports fungal growth, development and dispersal; whereas Class II form highly ordered films at water-air interfaces through intermolecular interactions but contribute nothing to the rodlet structure. Hydr1 is a class I hydrophobin involved in spore germination, appressorium formation, but not in the formation of the rodlet layer of conidia. Responsible for the full virulence on rubber tree leaves. This Colletotrichum siamense (Anthracnose fungus) protein is Class I hydrophobin 1.